Consider the following 137-residue polypeptide: Large ribosomal subunit protein uL16 (137 aa).

It belongs to the universal ribosomal protein uL16 family. Part of the 50S ribosomal subunit.

In terms of biological role, binds 23S rRNA and is also seen to make contacts with the A and possibly P site tRNAs. This chain is Large ribosomal subunit protein uL16, found in Streptococcus pneumoniae serotype 2 (strain D39 / NCTC 7466).